Here is a 648-residue protein sequence, read N- to C-terminus: MGLPRLVCAFLFAACCCCRSATGVPGEEKQPTPTPDPVEVEVGNTALLKCGPAHPSGNFSQVEWFLIHKERQIPIFRVHQGKGQSEPGEYEHRLSLHGPGATLALSQVTPHDDRMFLCKSKQPRPQDHYVQLQVYKAPEEPTIQANVLGIHVDIQELKEVATCVGRNGYPIPQVIWYKNGRPLQEEENRVHIQSSQTVESSGLYTLKSVLSARLVKEDKDAQFYCELSYRLPSGNRMKESKEVTVPVLYPAEKVWVEVEPVGLLKEGDHVKIRCLTDGNPQPHFTINKKNPSTEEMEEESTDENGLLSLEPAQKHHSGVYQCQSLDLETTVMLSSDPLELLVNYVSDVQVDPTAPEVQEGDSLTLTCKAESNQDLEFEWLRDKTGQLLGKGPILQLNNVKREAGGRYLCVASVPSVPGLNRTRRVSVGIFGSPWMAAKERKVWAQENAMLNLSCEASGHPQPTISWNINGSATEWNPDPQTVVSTLNVLVTPELLETGAECTASNSLGSNTTVIILKLVTLTTLTPDSSQTTGLSTPTVSPHSRANSTSTEKKLPQQESKGVVIVAVIVCTLVLAVLGATLYYFYKKGKLPCGRSGKQEITLPPTRKSEFVVEVKSDKLPEEMALLQGSNGDKRAPGDQGEKYIDLRH.

A signal peptide spans 1–23; it reads MGLPRLVCAFLFAACCCCRSATG. 2 consecutive Ig-like V-type domains span residues 24–131 and 141–244; these read VPGE…HYVQ and PTIQ…KEVT. The Extracellular portion of the chain corresponds to 24 to 560; sequence VPGEEKQPTP…EKKLPQQESK (537 aa). Disulfide bonds link Cys50–Cys118, Cys163–Cys225, Cys274–Cys322, Cys367–Cys409, and Cys454–Cys501. Asn58 carries an N-linked (GlcNAc...) asparagine glycan. Ig-like C2-type domains follow at residues 246–332, 337–426, and 432–512; these read PVLY…TTVM, PLEL…RRVS, and SPWM…SNTT. The disordered stretch occupies residues 282–304; it reads PHFTINKKNPSTEEMEEESTDEN. Asn510 carries N-linked (GlcNAc...) asparagine glycosylation. Polar residues predominate over residues 527 to 549; that stretch reads DSSQTTGLSTPTVSPHSRANSTS. The segment at 527–554 is disordered; the sequence is DSSQTTGLSTPTVSPHSRANSTSTEKKL. The helical transmembrane segment at 561-581 threads the bilayer; the sequence is GVVIVAVIVCTLVLAVLGATL. Residues 582-648 are Cytoplasmic-facing; the sequence is YYFYKKGKLP…QGEKYIDLRH (67 aa). Ser608 and Ser616 each carry phosphoserine. The interval 626–648 is disordered; sequence LQGSNGDKRAPGDQGEKYIDLRH. Residues 631–648 are compositionally biased toward basic and acidic residues; that stretch reads GDKRAPGDQGEKYIDLRH.

As to expression, detected in lung, uterus and placenta (at protein level). Detected in heart, lung, kidney, adrenal gland, intestine, testis, skeletal muscle and aorta. Detected at low levels in adult brain, in particular in brain stem and spinal cord, but also in hippocampus, olfactory bulb and striatum (at protein level).

The protein localises to the cell membrane. The protein resides in the perikaryon. Plays a role in cell adhesion, and in cohesion of the endothelial monolayer at intercellular junctions in vascular tissue. Its expression may allow melanoma cells to interact with cellular elements of the vascular system, thereby enhancing hematogeneous tumor spread. Could be an adhesion molecule active in neural crest cells during embryonic development. Acts as a surface receptor that triggers tyrosine phosphorylation of FYN and PTK2/FAK1, and a transient increase in the intracellular calcium concentration. The chain is Cell surface glycoprotein MUC18 (Mcam) from Rattus norvegicus (Rat).